Reading from the N-terminus, the 139-residue chain is Ribosome-binding factor A (139 aa).

Residues 112–139 (EARTQGQAAPAPDVEPAPGAAPDDEAEE) form a disordered region. Low complexity predominate over residues 119–132 (AAPAPDVEPAPGAA).

Belongs to the RbfA family. Monomer. Binds 30S ribosomal subunits, but not 50S ribosomal subunits or 70S ribosomes.

The protein resides in the cytoplasm. Its function is as follows. One of several proteins that assist in the late maturation steps of the functional core of the 30S ribosomal subunit. Associates with free 30S ribosomal subunits (but not with 30S subunits that are part of 70S ribosomes or polysomes). Required for efficient processing of 16S rRNA. May interact with the 5'-terminal helix region of 16S rRNA. This is Ribosome-binding factor A from Anaeromyxobacter dehalogenans (strain 2CP-1 / ATCC BAA-258).